The chain runs to 203 residues: Urease accessory protein UreG (203 aa).

14 to 21 is a binding site for GTP; the sequence is GPVGSGKT.

The protein belongs to the SIMIBI class G3E GTPase family. UreG subfamily. In terms of assembly, homodimer. UreD, UreF and UreG form a complex that acts as a GTP-hydrolysis-dependent molecular chaperone, activating the urease apoprotein by helping to assemble the nickel containing metallocenter of UreC. The UreE protein probably delivers the nickel.

The protein resides in the cytoplasm. Functionally, facilitates the functional incorporation of the urease nickel metallocenter. This process requires GTP hydrolysis, probably effectuated by UreG. This Rhizobium leguminosarum bv. viciae protein is Urease accessory protein UreG.